Consider the following 301-residue polypeptide: Protein ARMCX6 (301 aa).

Residues 1–6 (MGRARE) are mitochondrion outer membrane (MOM)-targeting sequence. Residues 1-7 (MGRAREM) lie on the Mitochondrial intermembrane side of the membrane. A helical; Signal-anchor transmembrane segment spans residues 8–25 (GWMAAGLMIGAGACYCMY). A mitochondrion outer membrane (MOM)-targeting sequence region spans residues 26–36 (KLTMGRSEGNE). At 26 to 301 (KLTMGRSEGN…REMLVEAISP (276 aa)) the chain is on the cytoplasmic side. A disordered region spans residues 69–101 (WSEDGDWDEPGAPGGTEDRRSGGGKANRAHPIK).

Belongs to the eutherian X-chromosome-specific Armcx family. Highly expressed in the developing neural tissues, neural crest derivatives and hind limbs. Also widely expressed in the adult nervous tissue, especially in the forebrain, including the cerebral cortex, hippocampus and thalamus.

The protein resides in the mitochondrion. Its subcellular location is the mitochondrion outer membrane. Its function is as follows. May regulate the dynamics and distribution of mitochondria in neural cells. The chain is Protein ARMCX6 (Armcx6) from Mus musculus (Mouse).